A 138-amino-acid polypeptide reads, in one-letter code: Hexon-interlacing protein (138 aa).

Positions 100–127 (LLVLLAQLEALTQRLGELSKQVAQLREQ) form a coiled coil.

It belongs to the adenoviridae hexon-interlacing protein family. As to quaternary structure, homotrimer. Interacts with hexon protein; this interaction tethers the hexons together. Self-interacts with adjacent proteins. Interacts with kinesin light chain KLC1; this interaction leads to capsid disruption at the nuclear pore complex during virus entry into host cell.

The protein resides in the virion. It is found in the host nucleus. In terms of biological role, structural component of the virion that acts as a cement protein on the capsid exterior and forms triskelion structures consisting of three molecules that stabilize three hexon trimers at the center of each icosahedral facet and fixes the peripentonal hexons. Dispensable for assembly. During virus entry, recruits the anterograde motor kinesin-1 to the capsid docked at the nuclear pore complex thereby subjecting the docked capsid to a pulling force. The resulting tension leads to capsid disruption, dispersion of capsid fragments toward cell periphery and eventually viral DNA entry into the host nucleus. In Human adenovirus B serotype 7 (HAdV-7), this protein is Hexon-interlacing protein.